A 286-amino-acid polypeptide reads, in one-letter code: Pantothenate synthetase (286 aa).

Position 31-38 (31-38) interacts with ATP; that stretch reads MGALHDGH. Catalysis depends on H38, which acts as the Proton donor. (R)-pantoate is bound at residue Q62. Q62 provides a ligand contact to beta-alanine. 148–151 is a binding site for ATP; it reads GKKD. Q154 serves as a coordination point for (R)-pantoate. ATP-binding positions include V177 and 185–188; that span reads KSSR.

It belongs to the pantothenate synthetase family. In terms of assembly, homodimer.

The protein localises to the cytoplasm. It catalyses the reaction (R)-pantoate + beta-alanine + ATP = (R)-pantothenate + AMP + diphosphate + H(+). It functions in the pathway cofactor biosynthesis; (R)-pantothenate biosynthesis; (R)-pantothenate from (R)-pantoate and beta-alanine: step 1/1. In terms of biological role, catalyzes the condensation of pantoate with beta-alanine in an ATP-dependent reaction via a pantoyl-adenylate intermediate. The protein is Pantothenate synthetase of Staphylococcus epidermidis (strain ATCC 35984 / DSM 28319 / BCRC 17069 / CCUG 31568 / BM 3577 / RP62A).